A 564-amino-acid polypeptide reads, in one-letter code: Kelch repeat and BTB domain-containing protein A55 (564 aa).

One can recognise a BTB domain in the interval 21–88 (CDISIVINDE…IYGIPLSLTN (68 aa)). Kelch repeat units lie at residues 252–297 (IELI…VLDN), 298–346 (IIYM…ADDE), 347–395 (YIYC…MLNG), 397–441 (IYVM…VHDG), 442–492 (KIYI…SAHN), and 494–539 (LYVG…CEPI).

It belongs to the poxviruses A55 protein family. In terms of assembly, interacts (via BTB domain) with host CUL3.

The protein resides in the host cytoplasm. Its function is as follows. Probable substrate-specific adapter of CUL3-containing E3 ubiquitin-protein ligases which mediate the ubiquitination and subsequent proteasomal degradation of host target proteins. The chain is Kelch repeat and BTB domain-containing protein A55 (KBTB1) from Bos taurus (Bovine).